The sequence spans 101 residues: Urease subunit beta (101 aa).

This sequence belongs to the urease beta subunit family. As to quaternary structure, heterotrimer of UreA (gamma), UreB (beta) and UreC (alpha) subunits. Three heterotrimers associate to form the active enzyme.

Its subcellular location is the cytoplasm. It catalyses the reaction urea + 2 H2O + H(+) = hydrogencarbonate + 2 NH4(+). It functions in the pathway nitrogen metabolism; urea degradation; CO(2) and NH(3) from urea (urease route): step 1/1. This Pseudomonas paraeruginosa (strain DSM 24068 / PA7) (Pseudomonas aeruginosa (strain PA7)) protein is Urease subunit beta.